A 122-amino-acid chain; its full sequence is MERQQQLLAAYQQIHSLSSQMIALAQTERWEDLVELELAYVTAVESTAAFTGQAGPSMALQELLRNKLQQILDNETELKRLLQQRMDQLKELIGQSTRQNVVNSTYGQFNDRALLLGEPQIR.

A required for homodimerization region spans residues 1-50 (MERQQQLLAAYQQIHSLSSQMIALAQTERWEDLVELELAYVTAVESTAAF). The fliD binding stretch occupies residues 60-98 (LQELLRNKLQQILDNETELKRLLQQRMDQLKELIGQSTR).

The protein belongs to the FliT family. Homodimer. Interacts with FliD and FlhC.

The protein resides in the cytoplasm. It is found in the cytosol. Its function is as follows. Dual-function protein that regulates the transcription of class 2 flagellar operons and that also acts as an export chaperone for the filament-capping protein FliD. As a transcriptional regulator, acts as an anti-FlhDC factor; it directly binds FlhC, thus inhibiting the binding of the FlhC/FlhD complex to class 2 promoters, resulting in decreased expression of class 2 flagellar operons. As a chaperone, effects FliD transition to the membrane by preventing its premature polymerization, and by directing it to the export apparatus. The chain is Flagellar protein FliT from Serratia proteamaculans (strain 568).